An 88-amino-acid chain; its full sequence is RNA-binding protein Hfq (88 aa).

Residues 9-68 enclose the Sm domain; sequence DPFLNALRRERIPVSIYLVNGIKLQGQIESFDQFVILLKNTVNQMVYKHAISTVVPARAV. The segment at 66–88 is disordered; it reads RAVSHHSGEQQRAPSDRPEKTED. Basic and acidic residues predominate over residues 71-88; sequence HSGEQQRAPSDRPEKTED.

Belongs to the Hfq family. As to quaternary structure, homohexamer.

Functionally, RNA chaperone that binds small regulatory RNA (sRNAs) and mRNAs to facilitate mRNA translational regulation in response to envelope stress, environmental stress and changes in metabolite concentrations. Also binds with high specificity to tRNAs. The protein is RNA-binding protein Hfq of Vibrio atlanticus (strain LGP32) (Vibrio splendidus (strain Mel32)).